The primary structure comprises 653 residues: Threonine--tRNA ligase (653 aa).

The TGS domain occupies 1–61; it reads MIKITFPDGN…NEDAEVKLFK (61 aa). Residues 243 to 542 are catalytic; that stretch reads DHRKIGKELE…LIEHTAGKFP (300 aa). The Zn(2+) site is built by Cys338, His389, and His519.

The protein belongs to the class-II aminoacyl-tRNA synthetase family. As to quaternary structure, homodimer. It depends on Zn(2+) as a cofactor.

The protein localises to the cytoplasm. The enzyme catalyses tRNA(Thr) + L-threonine + ATP = L-threonyl-tRNA(Thr) + AMP + diphosphate + H(+). Its function is as follows. Catalyzes the attachment of threonine to tRNA(Thr) in a two-step reaction: L-threonine is first activated by ATP to form Thr-AMP and then transferred to the acceptor end of tRNA(Thr). Also edits incorrectly charged L-seryl-tRNA(Thr). The protein is Threonine--tRNA ligase of Porphyromonas gingivalis (strain ATCC BAA-308 / W83).